The chain runs to 434 residues: F-box only protein 15 (434 aa).

An F-box domain is found at 1-41 (MPSEILLKIFSYLDAVSLLCAGCVSRRFYHLANDNFIWIRI).

As to quaternary structure, directly interacts with SKP1 and CUL1.

In terms of biological role, substrate-recognition component of the SCF (SKP1-CUL1-F-box protein)-type E3 ubiquitin ligase complex. In Macaca fascicularis (Crab-eating macaque), this protein is F-box only protein 15 (FBXO15).